A 436-amino-acid polypeptide reads, in one-letter code: 3-ketoacyl-CoA thiolase (436 aa).

The active-site Acyl-thioester intermediate is the Cys-99. Active-site proton acceptor residues include His-392 and Cys-422.

This sequence belongs to the thiolase-like superfamily. Thiolase family. As to quaternary structure, heterotetramer of two alpha chains (FadJ) and two beta chains (FadI).

The protein resides in the cytoplasm. The enzyme catalyses an acyl-CoA + acetyl-CoA = a 3-oxoacyl-CoA + CoA. It participates in lipid metabolism; fatty acid beta-oxidation. Its function is as follows. Catalyzes the final step of fatty acid oxidation in which acetyl-CoA is released and the CoA ester of a fatty acid two carbons shorter is formed. The chain is 3-ketoacyl-CoA thiolase from Enterobacter sp. (strain 638).